Here is an 81-residue protein sequence, read N- to C-terminus: Cytotoxin 1c (81 aa).

Residues 1–21 (MKTLLLTLVVVTIVCLDLGYT) form the signal peptide. 4 cysteine pairs are disulfide-bonded: cysteine 24–cysteine 42, cysteine 35–cysteine 59, cysteine 63–cysteine 74, and cysteine 75–cysteine 80.

The protein belongs to the three-finger toxin family. Short-chain subfamily. Type IA cytotoxin sub-subfamily. As to quaternary structure, monomer in solution; Homodimer and oligomer in the presence of negatively charged lipids forming a pore with a size ranging between 20 and 30 Angstroms. As to expression, expressed by the venom gland.

It is found in the secreted. It localises to the target cell membrane. Shows cytolytic activity on many different cells by forming pore in lipid membranes. In vivo, increases heart rate or kills the animal by cardiac arrest. In addition, it binds to heparin with high affinity, interacts with Kv channel-interacting protein 1 (KCNIP1) in a calcium-independent manner, and binds to integrin alpha-V/beta-3 (ITGAV/ITGB3) with moderate affinity. This is Cytotoxin 1c from Naja atra (Chinese cobra).